Reading from the N-terminus, the 444-residue chain is MAECLHIVGAGMAGSEAAWQAAEMGVPVVLHEMRPKVGTFAHRTGQFAEMVCSNSFRSDDDERNAVGLLHWEMRAARGLIMEMAAAHRLPAGGALAVDRDPFAESVTARLRAHPLISVVEEEVAELPSSGNWIVATGPLTSSALAESLRALTGAEALAFFDAIAPIVYAETIDMEVAWRQSRYDKGETEDERTAYINCPMNREQYEAFIDALLAAEKTEFHEGETAGYFDGCLPIEVMAERGRETLRHGPMKPVGLTNSHRPAEKAYAVVQLRRDNKLGTLYNIVGFQTKMKYGAQTAVFKMIPGLENASFARLGGIHRNTFLNSPTLLDDRMRLKLRPNIRFAGQVTGVEGYVESAAMGLLAGRMAAAEILGRDLPPPPPETAMGALVTHITGGAEAKSFQPMNVNFGLFPPIDARGGRRGRKDRYKAYTDRAKAAFTEWLGA.

Gly-9–Gly-14 contributes to the FAD binding site.

It belongs to the MnmG family. TrmFO subfamily. Requires FAD as cofactor.

Its subcellular location is the cytoplasm. The enzyme catalyses uridine(54) in tRNA + (6R)-5,10-methylene-5,6,7,8-tetrahydrofolate + NADH + H(+) = 5-methyluridine(54) in tRNA + (6S)-5,6,7,8-tetrahydrofolate + NAD(+). It catalyses the reaction uridine(54) in tRNA + (6R)-5,10-methylene-5,6,7,8-tetrahydrofolate + NADPH + H(+) = 5-methyluridine(54) in tRNA + (6S)-5,6,7,8-tetrahydrofolate + NADP(+). Functionally, catalyzes the folate-dependent formation of 5-methyl-uridine at position 54 (M-5-U54) in all tRNAs. In Cereibacter sphaeroides (strain ATCC 17029 / ATH 2.4.9) (Rhodobacter sphaeroides), this protein is Methylenetetrahydrofolate--tRNA-(uracil-5-)-methyltransferase TrmFO.